The chain runs to 274 residues: Probable S-adenosylmethionine-dependent methyltransferase MT3114 (274 aa).

The disordered stretch occupies residues 1-24 (MCAFVPHVPRHSRGDNPPSASTAS).

This sequence belongs to the methyltransferase superfamily.

Its function is as follows. Probable S-adenosylmethionine-dependent methyltransferase required for the 6-O-methylation of the polysaccharide backbone of 6-O-methylglucosyl lipopolysaccharides (MGLP). This chain is Probable S-adenosylmethionine-dependent methyltransferase MT3114, found in Mycobacterium tuberculosis (strain CDC 1551 / Oshkosh).